The following is a 667-amino-acid chain: Threonine--tRNA ligase (667 aa).

One can recognise a TGS domain in the interval 3–64; sequence DMIRVTLPDG…EEDTNLALVT (62 aa). The tract at residues 252 to 561 is catalytic; it reads DHRRLGQEMD…LIEHFVGRFP (310 aa). Zn(2+) is bound by residues cysteine 357, histidine 408, and histidine 538.

The protein belongs to the class-II aminoacyl-tRNA synthetase family. In terms of assembly, homodimer. Zn(2+) serves as cofactor.

It is found in the cytoplasm. The enzyme catalyses tRNA(Thr) + L-threonine + ATP = L-threonyl-tRNA(Thr) + AMP + diphosphate + H(+). Its function is as follows. Catalyzes the attachment of threonine to tRNA(Thr) in a two-step reaction: L-threonine is first activated by ATP to form Thr-AMP and then transferred to the acceptor end of tRNA(Thr). Also edits incorrectly charged L-seryl-tRNA(Thr). The chain is Threonine--tRNA ligase from Sphingopyxis alaskensis (strain DSM 13593 / LMG 18877 / RB2256) (Sphingomonas alaskensis).